Reading from the N-terminus, the 802-residue chain is Sucrose synthase 1 (802 aa).

The tract at residues 272–749 (MMFNVVILSP…GLQRIYEKYT (478 aa)) is GT-B glycosyltransferase.

This sequence belongs to the glycosyltransferase 1 family. Plant sucrose synthase subfamily.

The catalysed reaction is an NDP-alpha-D-glucose + D-fructose = a ribonucleoside 5'-diphosphate + sucrose + H(+). In terms of biological role, sucrose-cleaving enzyme that provides UDP-glucose and fructose for various metabolic pathways. Most active in the sink tissues where it is responsible for the breakdown of the arriving sucrose. The sequence is that of Sucrose synthase 1 (SH-1) from Zea mays (Maize).